An 834-amino-acid polypeptide reads, in one-letter code: Translation factor GUF1 homolog, mitochondrial (834 aa).

A mitochondrion-targeting transit peptide spans 1 to 66; that stretch reads MKLCGVRGSG…RPLLAEPRRY (66 aa). The tr-type G domain maps to 129–314; the sequence is ACIRNVSVVA…QIIDKVPPPR (186 aa). GTP-binding positions include 138–145, 205–209, and 259–262; these read AHVDHGKT, DTPGH, and TKMD. Positions 475-507 are disordered; it reads ATGPPETASRTKPATAAETASSDDASGSSGSSV. Low complexity predominate over residues 488-507; sequence ATAAETASSDDASGSSGSSV.

It belongs to the TRAFAC class translation factor GTPase superfamily. Classic translation factor GTPase family. LepA subfamily.

Its subcellular location is the mitochondrion inner membrane. It carries out the reaction GTP + H2O = GDP + phosphate + H(+). Its function is as follows. Promotes mitochondrial protein synthesis. May act as a fidelity factor of the translation reaction, by catalyzing a one-codon backward translocation of tRNAs on improperly translocated ribosomes. Binds to mitochondrial ribosomes in a GTP-dependent manner. This Leishmania major protein is Translation factor GUF1 homolog, mitochondrial.